The following is a 208-amino-acid chain: OVARIAN TUMOR DOMAIN-containing deubiquitinating enzyme 2 (208 aa).

One can recognise an OTU domain in the interval I5–S127. D13 is a catalytic residue. Catalysis depends on C16, which acts as the Nucleophile. Residues H120 and H201 contribute to the active site.

The protein belongs to the peptidase C85 family.

The catalysed reaction is Thiol-dependent hydrolysis of ester, thioester, amide, peptide and isopeptide bonds formed by the C-terminal Gly of ubiquitin (a 76-residue protein attached to proteins as an intracellular targeting signal).. Its function is as follows. Hydrolase that can remove conjugated ubiquitin from proteins in vitro and may therefore play an important regulatory role at the level of protein turnover by preventing degradation. Cysteine protease with a preference for 'Lys-63' and 'Lys-48' -linked ubiquitin (UB) tetramers as substrates. The sequence is that of OVARIAN TUMOR DOMAIN-containing deubiquitinating enzyme 2 from Arabidopsis thaliana (Mouse-ear cress).